A 67-amino-acid polypeptide reads, in one-letter code: Large ribosomal subunit protein uL29 (67 aa).

This sequence belongs to the universal ribosomal protein uL29 family.

In Alkaliphilus metalliredigens (strain QYMF), this protein is Large ribosomal subunit protein uL29.